A 97-amino-acid polypeptide reads, in one-letter code: Large ribosomal subunit protein uL23 (97 aa).

The protein belongs to the universal ribosomal protein uL23 family. As to quaternary structure, part of the 50S ribosomal subunit. Contacts protein L29, and trigger factor when it is bound to the ribosome.

In terms of biological role, one of the early assembly proteins it binds 23S rRNA. One of the proteins that surrounds the polypeptide exit tunnel on the outside of the ribosome. Forms the main docking site for trigger factor binding to the ribosome. This Methylococcus capsulatus (strain ATCC 33009 / NCIMB 11132 / Bath) protein is Large ribosomal subunit protein uL23.